Consider the following 497-residue polypeptide: MKIFNDKQVWFVTGSQHLYGPQVLESVAQNSEEIIAGLNSSDDISVSIANKGTVKTPDEILAVCRAANNDPDCIGLMLWMHTFSPAKMWIAGLTQLNKPFLHLHTQFNAALPWDEIDMDFMNLNQSAHGCREFGFIGTRLNIERKVVVGHWQEPQVHRDIDDWCRAAIGVNAGQHLKVARFGDNMRQVAVTEGNKVSAQIQFGYEVNAYGLGELSDVVNSISDADVNHQLDKYACMYEMSPDLFNDSDLKKLMAQEARLELGMESFLKSVGAGAFTNTFENLTGLTNLPGLATQRLMAKGFGYGGEGDWKTAAMTHIMKVMGQGKPGGTSFMEDYTYNFGEKGQVLGAHMLEVCPTIAAAKPRLEVHRHTIGCRCDIPRLIFSGQSGEALNVSIIDLGDRFRMIVNVIDTVTPPQSLPHLPVAHALWEPQPNLNIAAAAWIHAGGAHHAVYSQAVTLPMLADYAEILGIEMVVIDNSTNLRQFKQELRNNGVYYRLG.

Residues glutamate 306, glutamate 333, histidine 349, and histidine 448 each coordinate Mn(2+).

Belongs to the arabinose isomerase family. It depends on Mn(2+) as a cofactor.

It catalyses the reaction beta-L-arabinopyranose = L-ribulose. It participates in carbohydrate degradation; L-arabinose degradation via L-ribulose; D-xylulose 5-phosphate from L-arabinose (bacterial route): step 1/3. Its function is as follows. Catalyzes the conversion of L-arabinose to L-ribulose. This chain is L-arabinose isomerase, found in Vibrio parahaemolyticus serotype O3:K6 (strain RIMD 2210633).